The sequence spans 489 residues: MSFRKVVRQSKFRHVFGQPVKNDQCYEDIRVSRVTWDSTFCAVNPKFLAVIVEASGGGAFLVLPLSKTGRIDKAYPTVCGHTGPVLDIDWCPHNDEVIASGSEDCTVMVWQIPENGLTSPLTEPVVVLEGHTKRVGIIAWHPTARNVLLSAGCDNVVLIWNVGTAEELYRLDSLHPDLIYNVSWNHNGSLFCSACKDKSVRIIDPRRGTLVAEREKAHEGARPMRAIFLADGKVFTTGFSRMSERQLALWDPENLEEPMALQELDSSNGALLPFYDPDTSVVYVCGKGDSSIRYFEITEEPPYIHFLNTFTSKEPQRGMGSMPKRGLEVSKCEIARFYKLHERKCEPIVMTVPRKSDLFQDDLYPDTAGPEAALEAEEWVSGRDADPILISLREAYVPSKQRDLKISRRNVLSDSRPAMAPGSSHLGAPASTTTAADATPSGSLARAGEAGKLEEVMQELRALRALVKEQGDRICRLEEQLGRMENGDA.

At S2 the chain carries Phosphoserine; by PKC. 6 WD repeats span residues Q18–D72, K73–T122, E123–E166, E167–L210, V211–E256, and E257–E296. Residues R408–L444 are disordered. The span at A428–S441 shows a compositional bias: low complexity. Residues E449–I474 adopt a coiled-coil conformation.

Belongs to the WD repeat coronin family. As to quaternary structure, forms homooligomers, but does not form complexes with the other coronins. Interacts with Arp2/3 complex components, including ACTR2, ARPC1B and ARPC2. Binds actin. Post-translationally, phosphorylation by PKC on Ser-2 regulates the interaction with the Arp2/3 complex and cell motility in fibroblasts. Phosphorylation does not seem to affect subcellular location.

The protein resides in the cytoplasm. Its subcellular location is the cytoskeleton. It localises to the stress fiber. Regulates leading edge dynamics and cell motility in fibroblasts. May be involved in cytokinesis and signal transduction. In Homo sapiens (Human), this protein is Coronin-1B (CORO1B).